The following is a 322-amino-acid chain: Quinolinate synthase (322 aa).

Residues His37 and Ser54 each coordinate iminosuccinate. A [4Fe-4S] cluster-binding site is contributed by Cys99. Residues 125–127 (YVN) and Ser142 contribute to the iminosuccinate site. Residue Cys185 participates in [4Fe-4S] cluster binding. Iminosuccinate is bound by residues 211 to 213 (HPE) and Thr228. Cys278 is a binding site for [4Fe-4S] cluster.

Belongs to the quinolinate synthase family. Type 2 subfamily. Requires [4Fe-4S] cluster as cofactor.

It localises to the cytoplasm. The catalysed reaction is iminosuccinate + dihydroxyacetone phosphate = quinolinate + phosphate + 2 H2O + H(+). Its pathway is cofactor biosynthesis; NAD(+) biosynthesis; quinolinate from iminoaspartate: step 1/1. Its function is as follows. Catalyzes the condensation of iminoaspartate with dihydroxyacetone phosphate to form quinolinate. The sequence is that of Quinolinate synthase from Chlorobaculum tepidum (strain ATCC 49652 / DSM 12025 / NBRC 103806 / TLS) (Chlorobium tepidum).